Reading from the N-terminus, the 390-residue chain is Protein snail (390 aa).

The SNAG domain stretch occupies residues 1–20 (MAANYKSCPLKKRPIVFVEE). Disordered stretches follow at residues 29 to 65 (ALTK…PKRD) and 162 to 191 (QSVY…DLSV). Composition is skewed to polar residues over residues 32-43 (KDSQFAQDQPQD) and 162-172 (QSVYSYQQMTP). 5 C2H2-type zinc fingers span residues 245-267 (FKCD…RQFH), 280-302 (HSCE…IRTH), 306-328 (CKCP…IRTH), 334-356 (FQCP…QQTH), and 362-385 (YACQ…SSNC).

The protein belongs to the snail C2H2-type zinc-finger protein family.

Its subcellular location is the nucleus. Functionally, essential for the correct specification of ventral-dorsal patterns. In Drosophila melanogaster (Fruit fly), this protein is Protein snail (sna).